An 884-amino-acid polypeptide reads, in one-letter code: Cytosolic carboxypeptidase-like protein 5 (884 aa).

Residues 157–570 (YPFSYSDCQD…AMAIAALDMA (414 aa)) enclose the Peptidase M14 domain. Zn(2+) contacts are provided by H252 and E255. Disordered regions lie at residues 343–364 (HPQSPSEHQHSPCLPPDAPLSD) and 376–401 (HLGHTSDGDSPEDWTQTRPAEQKASG). Residue H434 participates in Zn(2+) binding. E516 functions as the Proton donor/acceptor in the catalytic mechanism. 2 disordered regions span residues 603 to 737 (LSST…HSTG) and 784 to 859 (QVRP…RICY). The segment covering 620–635 (PPRSNSGLPVSCSENP) has biased composition (polar residues). 2 stretches are compositionally biased toward low complexity: residues 641-666 (SFSTGTSAGGSSSSQQNSPQMKNSPS) and 714-737 (PTSSSLAPSPNPTSSSPASSHSTG). S839 is subject to Phosphoserine. Residues 846–857 (ISCSLSDSQSRI) show a composition bias toward polar residues.

The protein belongs to the peptidase M14 family. The cofactor is Zn(2+).

It is found in the cytoplasm. Its subcellular location is the cytosol. The protein localises to the nucleus. It localises to the cytoskeleton. The protein resides in the spindle. It is found in the midbody. It carries out the reaction gamma-L-glutamyl-L-glutamyl-[protein] + H2O = L-glutamyl-[protein] + L-glutamate. The enzyme catalyses (L-glutamyl)(n+1)-gamma-L-glutamyl-L-glutamyl-[protein] + H2O = (L-glutamyl)(n)-gamma-L-glutamyl-L-glutamyl-[protein] + L-glutamate. It catalyses the reaction C-terminal L-alpha-aminoacyl-L-glutamyl-[tubulin] + H2O = C-terminal L-alpha-aminoacyl-[tubulin] + L-glutamate. The catalysed reaction is C-terminal L-alpha-aminoacyl-L-glutamyl-L-glutamyl-[tubulin] + H2O = C-terminal L-alpha-aminoacyl-L-glutamyl-[tubulin] + L-glutamate. Its function is as follows. Metallocarboxypeptidase that mediates deglutamylation of tubulin and non-tubulin target proteins. Catalyzes the removal of polyglutamate side chains present on the gamma-carboxyl group of glutamate residues within the C-terminal tail of alpha- and beta-tubulin. Cleaves alpha- and gamma-linked polyglutamate tubulin side-chain, as well as the branching point glutamate. Also catalyzes the removal of alpha-linked glutamate residues from the carboxy-terminus of alpha-tubulin. Mediates deglutamylation of nucleotidyltransferase CGAS, leading to CGAS antiviral defense response activation. This Ailuropoda melanoleuca (Giant panda) protein is Cytosolic carboxypeptidase-like protein 5 (AGBL5).